The following is a 368-amino-acid chain: Protein ALTERED XYLOGLUCAN 9 (368 aa).

The Cytoplasmic segment spans residues methionine 1 to methionine 32. Residues leucine 33 to phenylalanine 53 form a helical membrane-spanning segment. At proline 54–leucine 368 the chain is on the lumenal side. N-linked (GlcNAc...) asparagine glycosylation is found at asparagine 99, asparagine 137, and asparagine 235.

It localises to the golgi apparatus membrane. In terms of biological role, component of the plant cell wall polysaccharide acetylation pathway. Does not directly catalyze O-acetylation of xyloglucan but exhibits weak acetylesterase activity in vitro. The polypeptide is Protein ALTERED XYLOGLUCAN 9 (Arabidopsis thaliana (Mouse-ear cress)).